Here is a 586-residue protein sequence, read N- to C-terminus: Arginine--tRNA ligase (586 aa).

The short motif at 133–143 (ANPTGPLNIVS) is the 'HIGH' region element.

The protein belongs to the class-I aminoacyl-tRNA synthetase family. Monomer.

Its subcellular location is the cytoplasm. The enzyme catalyses tRNA(Arg) + L-arginine + ATP = L-arginyl-tRNA(Arg) + AMP + diphosphate. This Leptospira borgpetersenii serovar Hardjo-bovis (strain JB197) protein is Arginine--tRNA ligase.